We begin with the raw amino-acid sequence, 122 residues long: Cupin 2 conserved barrel domain-containing protein (122 aa).

The cupin 2 conserved barrel stretch occupies residues 55 to 119; the sequence is PGGVTTAEDH…DSPVEIVSIW (65 aa). Zn(2+)-binding residues include D63, H65, E69, and H103.

Requires Zn(2+) as cofactor.

The catalysed reaction is N(6)-hydroxy-L-lysine + L-glutamate + ATP = 1-L-glutamo-2-N(6-)L-lysinohydrazine + AMP + diphosphate + 2 H(+). With respect to regulation, inhibited by 1,10-phenanthroline (OP). In terms of biological role, catalyzes hydrazine (N-N) bond formation from an unstable ester intermediate, the product of the ATP-dependent condensation of L-N(6)-OH-lysine and L-glutamine substrates by a methionyl-tRNA synthase-like protein. This is Cupin 2 conserved barrel domain-containing protein from Rhodococcus jostii (strain RHA1).